Reading from the N-terminus, the 314-residue chain is Ketimine reductase mu-crystallin (314 aa).

3,3',5-triiodo-L-thyronine is bound at residue arginine 47. Residues aspartate 82, histidine 92, arginine 119, alanine 144, valine 146, glutamine 147, asparagine 168, arginine 169, threonine 170, asparagine 173, threonine 205, leucine 206, valine 226, and alanine 228 each coordinate NADPH. Glutamate 257 provides a ligand contact to 3,3',5-triiodo-L-thyronine. Serine 292 is an NADPH binding site.

It belongs to the ornithine cyclodeaminase/mu-crystallin family. Homodimer. Binds the thyroid hormone triiodothyronine (T3); T3 binding inhibits enzymatic activity. As to expression, expressed in neural tissues, muscle and kidney. Expressed in the inner ear.

The protein resides in the cytoplasm. It carries out the reaction L-pipecolate + NADP(+) = Delta(1)-piperideine-2-carboxylate + NADPH + H(+). The catalysed reaction is L-pipecolate + NAD(+) = Delta(1)-piperideine-2-carboxylate + NADH + H(+). It catalyses the reaction L-proline + NADP(+) = 1-pyrroline-2-carboxylate + NADPH + H(+). The enzyme catalyses L-proline + NAD(+) = 1-pyrroline-2-carboxylate + NADH + H(+). It carries out the reaction (3R)-1,4-thiomorpholine-3-carboxylate + NAD(+) = 3,4-dehydrothiomorpholine-3-carboxylate + NADH + 2 H(+). The catalysed reaction is (3R)-1,4-thiomorpholine-3-carboxylate + NADP(+) = 3,4-dehydrothiomorpholine-3-carboxylate + NADPH + 2 H(+). It catalyses the reaction (S)-cystathionine ketimine + NADH + 2 H(+) = (3R,5S)-2,3,5,6,7-pentahydro-1,4-thiazepine-3,5-dicarboxylate + NAD(+). The enzyme catalyses (S)-cystathionine ketimine + NADPH + 2 H(+) = (3R,5S)-2,3,5,6,7-pentahydro-1,4-thiazepine-3,5-dicarboxylate + NADP(+). It carries out the reaction (R)-lanthionine ketimine + NADPH + 2 H(+) = (3R,5R)-1,4-thiomorpholine-3,5-dicarboxylate + NADP(+). The catalysed reaction is Delta(2)-thiazoline-2-carboxylate + NADPH + 2 H(+) = L-thiazolidine-2-carboxylate + NADP(+). With respect to regulation, inhibited by thyroid hormones triiodothyronine (T3) and thyroxine (T4). In terms of biological role, catalyzes the NAD(P)H-dependent reduction of imine double bonds of a number of cyclic ketimine substrates, including sulfur-containing cyclic ketimines. Under physiological conditions, it efficiently catalyzes delta(1)-piperideine-2-carboxylate (P2C) and delta(1)-pyrroline-2-carboxylate (Pyr2C) reduction, suggesting a central role in lysine and glutamate metabolism. Additional substrates are delta(2)-thiazoline-2-carboxylate (T2C), 3,4-dehydrothiomorpholine-3-carboxylate (AECK), and (R)-lanthionine ketimine (LK) that is reduced at very low rate compared to other substrates. Also catalyzes the NAD(P)H-dependent reduction of (S)-cystathionine ketimine (CysK). This is Ketimine reductase mu-crystallin from Homo sapiens (Human).